A 458-amino-acid chain; its full sequence is UDP-glycosyltransferase 76G1 (458 aa).

His-25 serves as the catalytic Proton acceptor. His-25 contacts rebaudioside A. Residue His-25 participates in rubusoside binding. Asn-27 serves as a coordination point for UDP. Asp-124 functions as the Charge relay in the catalytic mechanism. Residues 146–147 (TS) and His-155 contribute to the rebaudioside A site. Residues Ser-283, 338 to 339 (WV), and 356 to 364 (HSGWNSTLE) each bind UDP. Rebaudioside A contacts are provided by residues Trp-359 and 380–381 (DQ).

The protein belongs to the UDP-glycosyltransferase family. Monomer.

It carries out the reaction steviolbioside + UDP-alpha-D-glucose = rebaudioside B + UDP + H(+). The catalysed reaction is stevioside + UDP-alpha-D-glucose = rebaudioside A + UDP + H(+). The enzyme catalyses rebaudioside E + UDP-alpha-D-glucose = rebaudioside D + UDP + H(+). It catalyses the reaction rebaudioside D + UDP-alpha-D-glucose = rebaudioside M + UDP + H(+). Involved in the biosynthesis of steviol glycosides in leaves. Converts the di-glycoside steviolbioside to the tri-glycoside rebaudioside B. Converts the tri-glycoside stevioside to the tetra-glycoside rebaudioside A. Converts the tetra-glycoside rebaudioside E to the penta-glycoside rebaudioside D. Converts the penta-glycoside rebaudioside D to the hexa-glycoside rebaudioside M. Can glucosylate rubusoside and rebaudioside A in vitro. The sequence is that of UDP-glycosyltransferase 76G1 from Stevia rebaudiana (Stevia).